A 257-amino-acid chain; its full sequence is tRNA dimethylallyltransferase (257 aa).

15-22 (GPTASGKS) is a binding site for ATP. 17–22 (TASGKS) lines the substrate pocket.

Belongs to the IPP transferase family. In terms of assembly, monomer. The cofactor is Mg(2+).

It carries out the reaction adenosine(37) in tRNA + dimethylallyl diphosphate = N(6)-dimethylallyladenosine(37) in tRNA + diphosphate. Its function is as follows. Catalyzes the transfer of a dimethylallyl group onto the adenine at position 37 in tRNAs that read codons beginning with uridine, leading to the formation of N6-(dimethylallyl)adenosine (i(6)A). The protein is tRNA dimethylallyltransferase of Oenococcus oeni (strain ATCC BAA-331 / PSU-1).